Consider the following 801-residue polypeptide: Elongation factor G, mitochondrial (801 aa).

A mitochondrion-targeting transit peptide spans 1–24 (MRCPSLARLPHRAISGLTRLPVRL). The 288-residue stretch at 99-386 (SRIRNIGIAA…GVIDYLPNPS (288 aa)) folds into the tr-type G domain. GTP is bound by residues 108–115 (AHIDSGKT), 184–188 (DTPGH), and 238–241 (NKMD).

Belongs to the TRAFAC class translation factor GTPase superfamily. Classic translation factor GTPase family. EF-G/EF-2 subfamily.

The protein localises to the mitochondrion. The protein operates within protein biosynthesis; polypeptide chain elongation. Functionally, mitochondrial GTPase that catalyzes the GTP-dependent ribosomal translocation step during translation elongation. During this step, the ribosome changes from the pre-translocational (PRE) to the post-translocational (POST) state as the newly formed A-site-bound peptidyl-tRNA and P-site-bound deacylated tRNA move to the P and E sites, respectively. Catalyzes the coordinated movement of the two tRNA molecules, the mRNA and conformational changes in the ribosome. The polypeptide is Elongation factor G, mitochondrial (mef1) (Aspergillus clavatus (strain ATCC 1007 / CBS 513.65 / DSM 816 / NCTC 3887 / NRRL 1 / QM 1276 / 107)).